The following is a 540-amino-acid chain: MTLNSLPVWPALQAHYEEIRDAHLRDWFAPANDRAPTRAERFTFEGGGLAADFSKNRLTDATLALLVRLAREAGVEARRDAMFAGETVNPTEGRAALHTALRANAADAPFQAQVAAERAKMARFADAVRSGAWTGYTGKRIRHVVNIGIGGSDLGPKMVVHALHHVATPDIATHFVSNVDGADLARVLERIDPEETLAIIVSKTFTTLETMTNARSLRDWFVANGCPEGALAKHFVGVSANPAEVVKFGIAEANVFEMWDWVGGRYSLWSAVGLSIMIAIGPERFDELLAGARDMDEHFRTAPLERNLPALQGLVGIWYRNFFGAQSYLVAPYSEALHYLPSYLQQLEMESNGKSARIDGAFVDYPTSAVTWGEPGTNGQHAFFQMLHQGPTLVPIDFIAVLTPEHPLASHHPKLLANCFAQSEALMLGRTLDEARKIAGPAKPELAPHLTFPGNRPTTTLLVDALTPRTLGALIALYEHKVLVQAAVWNINPFDQWGVELGKILGKVVEADLTAAQVDPAKHDSSTSALIARARKALGE.

The active-site Proton donor is E350. Active-site residues include H381 and K503.

It belongs to the GPI family.

Its subcellular location is the cytoplasm. The catalysed reaction is alpha-D-glucose 6-phosphate = beta-D-fructose 6-phosphate. It participates in carbohydrate biosynthesis; gluconeogenesis. The protein operates within carbohydrate degradation; glycolysis; D-glyceraldehyde 3-phosphate and glycerone phosphate from D-glucose: step 2/4. Catalyzes the reversible isomerization of glucose-6-phosphate to fructose-6-phosphate. This chain is Glucose-6-phosphate isomerase, found in Burkholderia pseudomallei (strain 668).